Reading from the N-terminus, the 499-residue chain is Endosomal/lysosomal proton channel TMEM175 (499 aa).

Over 1 to 30 (MSRLQTEEQAVDSEGDSSLHRRNEEGTQSS) the chain is Cytoplasmic. The interval 1–30 (MSRLQTEEQAVDSEGDSSLHRRNEEGTQSS) is disordered. At Thr6 the chain carries Phosphothreonine. The chain crosses the membrane as a helical span at residues 31–53 (HRMLGFSDALLSIIATVMILPVT). The RxxxFSD motif 1 motif lies at 32–38 (RMLGFSD). Topologically, residues 54 to 74 (HTEISPEQQFDKSIQKLLATR) are lumenal. The segment at 55–60 (TEISPE) is short helix H1-1. The short helix H2-1 stretch occupies residues 62–68 (QFDKSIQ). The chain crosses the membrane as a helical span at residues 75–97 (IAVYLMTFLIVTVAWTAHTRLFQ). The Cytoplasmic portion of the chain corresponds to 98–103 (VVGKID). Residues 104–125 (DTLALLNLACMMTITLLPYTFS) traverse the membrane as a helical segment. The Lumenal portion of the chain corresponds to 126–135 (LMVTFPDVPL). The chain crosses the membrane as a helical span at residues 136–157 (GIFLFCVCVIAIGSVQAMIVGY). Residues 158-181 (AFHFPHLLNPQIQCSTHRDLSRRH) lie on the Cytoplasmic side of the membrane. The chain crosses the membrane as a helical span at residues 182-202 (ILHLVLRGPALCFVAAVFSLF). At 203-207 (FFPLS) the chain is on the lumenal side. Residues 208-227 (YLLMVTVIFLPHISKATTWC) traverse the membrane as a helical segment. Residues 228–254 (KDKLMGQRESPAHDMEPFSIDLHAPLS) are Cytoplasmic-facing. A helical transmembrane segment spans residues 255-279 (KERVEAFSDGVYAIVATLLILDICE). The short motif at 257 to 263 (RVEAFSD) is the RxxxFSD motif 2 element. Over 280-306 (DNVPDPKDVQEKFSGSLVAALGAYGPQ) the chain is Lumenal. Positions 285 to 293 (PKDVQEKFS) are short helix H1-2. Residues 295–301 (SLVAALG) form a short helix H2-2 region. A helical membrane pass occupies residues 307 to 329 (FLAYFGSFATVGLLWFAHHSLFL). Residues 330–335 (HVRKAT) are Cytoplasmic-facing. Residues 336-357 (QTMGLLNILSLAFVGGLPLAYQ) form a helical membrane-spanning segment. Residues 358 to 372 (QTSAFARQPHDELER) lie on the Lumenal side of the membrane. Residues 373–393 (VRVSCAIIFFASIFQFAIWTT) traverse the membrane as a helical segment. The Cytoplasmic portion of the chain corresponds to 394-413 (ALLHQTETLQPAVQFGGQEH). A helical transmembrane segment spans residues 414 to 437 (AFMFAKLALYPCASLLAFAATCLL). The Lumenal segment spans residues 438–439 (SR). The chain crosses the membrane as a helical span at residues 440–466 (FSTAIFHLMQISVPFAFLLLRLLVRLA). The Cytoplasmic portion of the chain corresponds to 467–499 (LAGLQVLRGLWPHHPQQDQSEPEAQSQLLPDPC).

It belongs to the TMEM175 family. Homodimer. Interacts with AKT (AKT1, AKT2 or AKT3); leading to formation of the lysoK(GF) complex, which activates the channel. Interacts with LAMP1; inhibiting the proton channel activity of TMEM175. Interacts with LAMP2; inhibiting the proton channel activity of TMEM175.

The protein resides in the endosome membrane. Its subcellular location is the lysosome membrane. It catalyses the reaction H(+)(in) = H(+)(out). It carries out the reaction K(+)(in) = K(+)(out). Its activity is regulated as follows. Active at low pH (under pH 4.6): proton channel activity is activated by luminal side protons. Polyunsaturated fatty acids, such as arachidonic acid, also activate the channel activity. Proton channel activity is directly inhibited by LAMP1 or LAMP2, facilitating lysosomal acidification. Channel activity is activated following interaction with AKT (AKT1, AKT2 or AKT3): interaction promotes activation from closed to an open state. Activation by AKT is independent of AKT serine/threonine-protein kinase activity. Functionally, proton-activated proton channel that catalyzes proton efflux from endosomes and lysosomes to maintain a steady-state pH. Activated at low pH (under pH 4.6) by luminal side protons: selectively mediates lysosomal proton release from lysosomes, eliciting a proton leak that balances V-ATPase activity to maintain pH homeostasis. Regulation of lumenal pH stability is required for autophagosome-lysosome fusion. Also acts as a potassium channel at higher pH, regulating potassium conductance in endosomes and lysosomes. Constitutes the pore-forming subunit of the lysoK(GF) complex, a complex activated by extracellular growth factors. The lysoK(GF) complex is composed of TMEM175 and AKT (AKT1, AKT2 or AKT3), a major target of growth factor receptors: in the complex, TMEM175 channel is opened by conformational changes by AKT, leading to its activation. The lysoK(GF) complex is required to protect neurons against stress-induced damage. The chain is Endosomal/lysosomal proton channel TMEM175 from Mus musculus (Mouse).